The sequence spans 288 residues: MAATFFGEVVKAPCRAGTEDEEEEDEGRRETPEDREVRQQLARKREVRLLRRQTKTSLEVSLLEKYPCSKFIIAIGNNAVAFLSSFVMNSGVWEEVGCAKLWNEWCRTTDTIHLSSTEAFCVFYHLKSNPSVFLCQCSCYVAEDQQYQWLEKVFGSCPRKNMQITILTCRHVTDYKTSESTGSLPSPFLKALKTQNFKDPACCPLLEQPNIVHDLPAAVLSYCQVWKIPAILYLCYTDVMKLDLITVEAFKPLLSTRSLKGLVKNIPQSTEILKKLMTTNEIQSNIYT.

Residues 1-37 (MAATFFGEVVKAPCRAGTEDEEEEDEGRRETPEDREV) are disordered. An N-acetylalanine modification is found at Ala-2. Phosphothreonine is present on Thr-18. The span at 26–37 (EGRRETPEDREV) shows a compositional bias: basic and acidic residues. Thr-54 bears the Phosphothreonine mark. Ser-180 carries the post-translational modification Phosphoserine. Position 264 is an N6-acetyllysine (Lys-264).

Belongs to the PSMG1 family. Forms a heterodimer with PSMG2. The PSMG1-PSMG2 heterodimer interacts directly with the PSMA5 and PSMA7 proteasome alpha subunits. Post-translationally, degraded by the proteasome upon completion of 20S proteasome maturation.

It localises to the cytoplasm. Its subcellular location is the endoplasmic reticulum. Its function is as follows. Chaperone protein which promotes assembly of the 20S proteasome as part of a heterodimer with PSMG2. The PSMG1-PSMG2 heterodimer binds to the PSMA5 and PSMA7 proteasome subunits, promotes assembly of the proteasome alpha subunits into the heteroheptameric alpha ring and prevents alpha ring dimerization. The chain is Proteasome assembly chaperone 1 (PSMG1) from Callithrix jacchus (White-tufted-ear marmoset).